The following is a 241-amino-acid chain: Uridylate kinase (241 aa).

ATP is bound at residue 12-15; it reads KISG. The involved in allosteric activation by GTP stretch occupies residues 20 to 25; it reads GDKGNG. Glycine 54 contacts UMP. ATP contacts are provided by glycine 55 and arginine 59. UMP is bound by residues aspartate 74 and 135 to 142; that span reads TGNPYFST. 3 residues coordinate ATP: asparagine 163, tyrosine 169, and aspartate 172.

The protein belongs to the UMP kinase family. Homohexamer.

It is found in the cytoplasm. It catalyses the reaction UMP + ATP = UDP + ADP. Its pathway is pyrimidine metabolism; CTP biosynthesis via de novo pathway; UDP from UMP (UMPK route): step 1/1. Allosterically activated by GTP. Inhibited by UTP. Its function is as follows. Catalyzes the reversible phosphorylation of UMP to UDP. The protein is Uridylate kinase of Lactobacillus helveticus (strain DPC 4571).